Reading from the N-terminus, the 94-residue chain is Copper resistance protein K (94 aa).

A signal peptide spans 1 to 20; it reads MKQKLMVGAFIAAVSLSAAA.

As to quaternary structure, monomer in the copper-bound form. Homodimer as apoprotein. Dissociates into monomers upon copper binding.

The protein localises to the periplasm. Its function is as follows. Involved in resistance to copper. Can bind up to 2 copper ions. Has higher affinity for Cu(+) than for Cu(2+). The chain is Copper resistance protein K (copK) from Cupriavidus metallidurans (strain ATCC 43123 / DSM 2839 / NBRC 102507 / CH34) (Ralstonia metallidurans).